Here is a 709-residue protein sequence, read N- to C-terminus: Leucine-rich repeat-containing protein 4B (709 aa).

The signal sequence occupies residues 1-38; the sequence is MAQAHIQGSPCPLLPPGRMSWPQGALLLLWLFSPPLRA. Residues 50–88 form the LRRNT domain; that stretch reads GGGSPPATSCPAACSCSNQASRVICTRRELAEVPASIPV. LRR repeat units follow at residues 89-110, 113-134, 137-158, 161-182, 185-207, 210-231, 232-253, 256-277, and 280-301; these read NTRY…TFKH, HLEI…AFNG, SLNT…AFEY, KLRE…AFNR, SLRR…AFEG, NLRY…TALV, RLEE…SFQG, SLRK…AFDD, and SLEE…LFTP. Residues 313–365 enclose the LRRCT domain; it reads NPWHCNCDVLWLSWWLKETVPSNTTCCARCHAPAGLKGRYIGELDQSHFTCYA. Residues 366–454 form the Ig-like C2-type domain; the sequence is PVIVEPPTDL…GNTTASATLN (89 aa). 5 N-linked (GlcNAc...) asparagine glycosylation sites follow: Asn-376, Asn-402, Asn-424, Asn-427, and Asn-446. Cys-387 and Cys-438 are joined by a disulfide. The segment at 496–552 is disordered; that stretch reads TQPGEEAQQPRGTEKEPPGPTTDGAWGGGRPDAAAPASASTTAPAPRSSRPTEKAFT. Residues 528 to 544 are compositionally biased toward low complexity; that stretch reads AAAPASASTTAPAPRSS. A helical transmembrane segment spans residues 575 to 595; the sequence is IIIGCFVAITFMAAVMLVAFY. Ser-689 is subject to Phosphoserine.

Interacts with PTPRF. Interacts with DLG4. Post-translationally, N-glycosylated. O-glycosylated; contains sialic acid. Mainly expressed in the brain. Widespread distribution in various brain regions (at protein level). Detected both embryonically and postnatally with stronger expression in postnatal stages.

The protein resides in the membrane. The protein localises to the presynaptic cell membrane. Synaptic adhesion protein. Regulates the formation of excitatory synapses. The trans-synaptic adhesion between LRRC4B and PTPRF regulates the formation of excitatory synapses in a bidirectional manner. The chain is Leucine-rich repeat-containing protein 4B (Lrrc4b) from Rattus norvegicus (Rat).